We begin with the raw amino-acid sequence, 328 residues long: Formimidoylglutamase (328 aa).

Positions 133, 159, 161, 163, 253, and 255 each coordinate Mn(2+).

Belongs to the arginase family. It depends on Mn(2+) as a cofactor.

It catalyses the reaction N-formimidoyl-L-glutamate + H2O = formamide + L-glutamate. The protein operates within amino-acid degradation; L-histidine degradation into L-glutamate; L-glutamate from N-formimidoyl-L-glutamate (hydrolase route): step 1/1. Functionally, catalyzes the conversion of N-formimidoyl-L-glutamate to L-glutamate and formamide. This Streptococcus pyogenes serotype M3 (strain ATCC BAA-595 / MGAS315) protein is Formimidoylglutamase.